The following is a 259-amino-acid chain: MSLLSRMRKINDMLQKSGVQHVNFREMAETLRDVISANIFVVSRRGKLLGFAIKQEIENERMKKMLEDRQFPEEYTTGLFKVEETSANLDINSEFTAFPVENKELFKTGLTTIVPISGGGQRLGTLILARLNDSFNDDDLILAEYGATVVGMEILHEKTQEIEEEARSKAVVQMAISSLSYSELEAVEHIFEELDGKEGLLVASKIADRVGITRSVIVNALRKLESAGVIESRSLGMKGTYIKVLNDKFLVELEKIKAS.

The tract at residues 1–155 (MSLLSRMRKI…GATVVGMEIL (155 aa)) is GAF domain. The segment at residues 203-222 (ASKIADRVGITRSVIVNALR) is a DNA-binding region (H-T-H motif). A Phosphoserine modification is found at serine 215.

This sequence belongs to the CodY family.

Its subcellular location is the cytoplasm. Functionally, DNA-binding global transcriptional regulator which is involved in the adaptive response to starvation and acts by directly or indirectly controlling the expression of numerous genes in response to nutrient availability. During rapid exponential growth, CodY is highly active and represses genes whose products allow adaptation to nutrient depletion. This chain is Global transcriptional regulator CodY, found in Halalkalibacterium halodurans (strain ATCC BAA-125 / DSM 18197 / FERM 7344 / JCM 9153 / C-125) (Bacillus halodurans).